The sequence spans 563 residues: O-fucosyltransferase 14 (563 aa).

Over residues Met1–Ser16 the composition is skewed to low complexity. A disordered region spans residues Met1–Asn25. The helical; Signal-anchor for type II membrane protein transmembrane segment at Ile73 to Tyr93 threads the bilayer. Asn135, Asn140, and Asn339 each carry an N-linked (GlcNAc...) asparagine glycan. Substrate-binding positions include His412–Arg414 and Thr528–Phe529.

It belongs to the glycosyltransferase GT106 family.

Its subcellular location is the membrane. It participates in glycan metabolism. This Arabidopsis thaliana (Mouse-ear cress) protein is O-fucosyltransferase 14.